The following is a 542-amino-acid chain: Chaperonin GroEL (542 aa).

Residues 29–32, 86–90, Gly413, 477–479, and Asp493 contribute to the ATP site; these read TLGP, DGTTT, and NAA.

This sequence belongs to the chaperonin (HSP60) family. In terms of assembly, forms a cylinder of 14 subunits composed of two heptameric rings stacked back-to-back. Interacts with the co-chaperonin GroES.

It localises to the cytoplasm. The enzyme catalyses ATP + H2O + a folded polypeptide = ADP + phosphate + an unfolded polypeptide.. Its function is as follows. Together with its co-chaperonin GroES, plays an essential role in assisting protein folding. The GroEL-GroES system forms a nano-cage that allows encapsulation of the non-native substrate proteins and provides a physical environment optimized to promote and accelerate protein folding. This chain is Chaperonin GroEL, found in Heliobacterium modesticaldum (strain ATCC 51547 / Ice1).